The primary structure comprises 92 residues: Large ribosomal subunit protein bL34m (92 aa).

The N-terminal 46 residues, 1–46 (MAFLARCFGCQACRSVALLSGRYLQSRVWMGLPDSWPLLSLQQARG), are a transit peptide targeting the mitochondrion. The residue at position 71 (serine 71) is a Phosphoserine.

It belongs to the bacterial ribosomal protein bL34 family. As to quaternary structure, component of the mitochondrial ribosome large subunit (39S) which comprises a 16S rRNA and about 50 distinct proteins.

The protein localises to the mitochondrion. This is Large ribosomal subunit protein bL34m (Mrpl34) from Mus musculus (Mouse).